Consider the following 186-residue polypeptide: Adenine phosphoribosyltransferase (186 aa).

It belongs to the purine/pyrimidine phosphoribosyltransferase family. Homodimer.

The protein resides in the cytoplasm. The enzyme catalyses AMP + diphosphate = 5-phospho-alpha-D-ribose 1-diphosphate + adenine. The protein operates within purine metabolism; AMP biosynthesis via salvage pathway; AMP from adenine: step 1/1. Its function is as follows. Catalyzes a salvage reaction resulting in the formation of AMP, that is energically less costly than de novo synthesis. The sequence is that of Adenine phosphoribosyltransferase from Xanthomonas euvesicatoria pv. vesicatoria (strain 85-10) (Xanthomonas campestris pv. vesicatoria).